Reading from the N-terminus, the 356-residue chain is Histidinol-phosphate aminotransferase (356 aa).

The residue at position 210 (Lys-210) is an N6-(pyridoxal phosphate)lysine.

The protein belongs to the class-II pyridoxal-phosphate-dependent aminotransferase family. Histidinol-phosphate aminotransferase subfamily. In terms of assembly, homodimer. The cofactor is pyridoxal 5'-phosphate.

It catalyses the reaction L-histidinol phosphate + 2-oxoglutarate = 3-(imidazol-4-yl)-2-oxopropyl phosphate + L-glutamate. Its pathway is amino-acid biosynthesis; L-histidine biosynthesis; L-histidine from 5-phospho-alpha-D-ribose 1-diphosphate: step 7/9. The sequence is that of Histidinol-phosphate aminotransferase (hisC) from Acetobacter pasteurianus (Acetobacter turbidans).